Here is a 673-residue protein sequence, read N- to C-terminus: Elongation factor G 1 (673 aa).

One can recognise a tr-type G domain in the interval 3–277; it reads KELRNIGIIA…SIVDYLPSPL (275 aa). GTP contacts are provided by residues 12-19, 76-80, and 130-133; these read AHIDAGKT, DTPGH, and NKMD.

Belongs to the TRAFAC class translation factor GTPase superfamily. Classic translation factor GTPase family. EF-G/EF-2 subfamily.

The protein resides in the cytoplasm. Catalyzes the GTP-dependent ribosomal translocation step during translation elongation. During this step, the ribosome changes from the pre-translocational (PRE) to the post-translocational (POST) state as the newly formed A-site-bound peptidyl-tRNA and P-site-bound deacylated tRNA move to the P and E sites, respectively. Catalyzes the coordinated movement of the two tRNA molecules, the mRNA and conformational changes in the ribosome. The protein is Elongation factor G 1 of Syntrophomonas wolfei subsp. wolfei (strain DSM 2245B / Goettingen).